Consider the following 102-residue polypeptide: Nucleoid-associated protein WS1681 (102 aa).

Belongs to the YbaB/EbfC family. As to quaternary structure, homodimer.

It is found in the cytoplasm. The protein localises to the nucleoid. Its function is as follows. Binds to DNA and alters its conformation. May be involved in regulation of gene expression, nucleoid organization and DNA protection. The polypeptide is Nucleoid-associated protein WS1681 (Wolinella succinogenes (strain ATCC 29543 / DSM 1740 / CCUG 13145 / JCM 31913 / LMG 7466 / NCTC 11488 / FDC 602W) (Vibrio succinogenes)).